The following is a 211-amino-acid chain: Shikimate kinase (211 aa).

A compositionally biased stretch (low complexity) spans 1-13; sequence MNASANLCAASAN. A disordered region spans residues 1 to 24; the sequence is MNASANLCAASANDPQPGDQEAAH. 50–55 serves as a coordination point for ATP; the sequence is GAGKTT. Residue T54 coordinates Mg(2+). Substrate is bound by residues D72, R96, and G118. ATP is bound at residue R156. Position 175 (R175) interacts with substrate.

The protein belongs to the shikimate kinase family. In terms of assembly, monomer. Mg(2+) serves as cofactor.

Its subcellular location is the cytoplasm. It carries out the reaction shikimate + ATP = 3-phosphoshikimate + ADP + H(+). Its pathway is metabolic intermediate biosynthesis; chorismate biosynthesis; chorismate from D-erythrose 4-phosphate and phosphoenolpyruvate: step 5/7. Its function is as follows. Catalyzes the specific phosphorylation of the 3-hydroxyl group of shikimic acid using ATP as a cosubstrate. The polypeptide is Shikimate kinase (Bordetella parapertussis (strain 12822 / ATCC BAA-587 / NCTC 13253)).